Here is a 270-residue protein sequence, read N- to C-terminus: Homeobox protein pal-1 (270 aa).

Disordered regions lie at residues 1–24 (MSVDVKSDFSENESSSTPSPTTVP), 96–130 (VKPPLSNGSSSSDSGMYPSPSDMMTPFPSTSSGAA), and 175–201 (LGNNHGKDRRSSSDGKTLPTGPGTNNV). Composition is skewed to low complexity over residues 14–24 (SSSTPSPTTVP) and 101–130 (SNGSSSSDSGMYPSPSDMMTPFPSTSSGAA). The segment at residues 206–265 (ADKYRMVYSDYQRLELEKEFHTSPFITSDRKSQLSTMLSLTERQIKIWFQNRRAKDRRDK) is a DNA-binding region (homeobox).

It belongs to the Caudal homeobox family. As to quaternary structure, interacts with tir-1 and let-756. In terms of tissue distribution, blastomeres. Embryo. Oocytes.

The protein localises to the nucleus. The protein resides in the chromosome. Its subcellular location is the centromere. It is found in the kinetochore. In terms of biological role, transcriptional activator. Interacts with promoter regions for tbx-8.9, tbx-9, elt-1, hnd-1, scrt-1, and vab-7 genes. Binds the sequence ATTTATGAC. Binds to the enhancer region of the hlh-1 gene promoter during embryonic body wall muscle development. Activates the gene for mab-5 in embryo development. Necessary for vab-7 expression in C blastomeres in the posterior of embryos. Required for posterior V6 neuroectoblast cell fate specification during postembryonic neurogenesis (patterning) which generates the characteristic ray lineage during male tail development. Binds to ced-3 promoter and activated expression which is crucial for tail-spike cell death. Has a role in E cell specification in endoderm development and body wall muscle development. The polypeptide is Homeobox protein pal-1 (pal-1) (Caenorhabditis elegans).